Here is a 207-residue protein sequence, read N- to C-terminus: FMN-dependent NADH:quinone oxidoreductase 3 (207 aa).

Residues serine 10 and 16 to 18 (SIS) contribute to the FMN site.

The protein belongs to the azoreductase type 1 family. As to quaternary structure, homodimer. It depends on FMN as a cofactor.

The enzyme catalyses 2 a quinone + NADH + H(+) = 2 a 1,4-benzosemiquinone + NAD(+). It catalyses the reaction N,N-dimethyl-1,4-phenylenediamine + anthranilate + 2 NAD(+) = 2-(4-dimethylaminophenyl)diazenylbenzoate + 2 NADH + 2 H(+). Its function is as follows. Quinone reductase that provides resistance to thiol-specific stress caused by electrophilic quinones. Functionally, also exhibits azoreductase activity. Catalyzes the reductive cleavage of the azo bond in aromatic azo compounds to the corresponding amines. In Burkholderia lata (strain ATCC 17760 / DSM 23089 / LMG 22485 / NCIMB 9086 / R18194 / 383), this protein is FMN-dependent NADH:quinone oxidoreductase 3.